Here is a 284-residue protein sequence, read N- to C-terminus: MNSSKLFFGWTDESSQNKGRYRAIGMVSHPAEFGSELEGDINSILDSVVDESGLKRRELKWNKIDIFRCRAYEKIVDYFLELSNLGNPPVRVDILRWDIEDSRHSIQGRDDNQNLQRMYYHLFSNVISKRWPSGDWCFFPDETGSVDWEEVAFFLDIGGSKVDLKEQFNILSINEVDSKDNVLVQVADFFAGLSVFSKEKFGLYVDWNYEECGQQRLVPVENVEFSKKDRKRFEILSYFNKRCKELKMGVSLDTSEGLWTPKPANSINFWHYEPQSDADKAPIR.

This is an uncharacterized protein from Methanothermobacter thermautotrophicus (Methanobacterium thermoformicicum).